A 155-amino-acid chain; its full sequence is Ribonuclease H (155 aa).

The region spanning 1-142 is the RNase H type-1 domain; that stretch reads MLKQVEIFTD…CDELARAAAM (142 aa). 4 residues coordinate Mg(2+): D10, E48, D70, and D134.

It belongs to the RNase H family. Monomer. Mg(2+) serves as cofactor.

It localises to the cytoplasm. It catalyses the reaction Endonucleolytic cleavage to 5'-phosphomonoester.. In terms of biological role, endonuclease that specifically degrades the RNA of RNA-DNA hybrids. This Escherichia fergusonii (strain ATCC 35469 / DSM 13698 / CCUG 18766 / IAM 14443 / JCM 21226 / LMG 7866 / NBRC 102419 / NCTC 12128 / CDC 0568-73) protein is Ribonuclease H.